Consider the following 161-residue polypeptide: MSEKNLKQTVEERALALLEPIVAGEGLELVDLEFLREREGWVLRLFIDKPGGRVGLDECTQVSRAVDPSLDVEDFIPHEYNLEVSSPGVDRPLRKPTHFERVKGQQVKVKTFGPVGEPPRKNFTGTLTEVAGDGISVEVEGAGTFHILFKDIAKANLEFQF.

Belongs to the RimP family.

The protein localises to the cytoplasm. Its function is as follows. Required for maturation of 30S ribosomal subunits. This Myxococcus xanthus (strain DK1622) protein is Ribosome maturation factor RimP.